Consider the following 1472-residue polypeptide: ABC transporter FGM5 (1472 aa).

Helical transmembrane passes span 32–52, 67–87, 100–120, 163–183, 197–217, 271–291, 316–336, 386–406, 412–432, 493–513, and 534–554; these read IILG…RVAT, FTKL…LILS, FAVA…ALSF, YAGV…LELQ, SPEE…IGIF, ALIV…GFQY, GLIG…ALFW, FHGL…CFLL, LAFI…TAIA, LLIM…VVAF, and LLTN…AAFV. In terms of domain architecture, ABC transmembrane type-1 1 spans 284–551; that stretch reads IAMIGFQYAQ…MFQSVPAVIA (268 aa). Residues 605–834 form the ABC transporter 1 domain; it reads ISIVDGSFGW…GIYIPTLGLS (230 aa). 638-645 provides a ligand contact to ATP; it reads GPVASGKS. Asn682, Asn696, Asn763, Asn784, and Asn843 each carry an N-linked (GlcNAc...) asparagine glycan. 4 helical membrane-spanning segments follow: residues 900-920, 938-958, 1003-1023, and 1024-1044; these read LLSG…MGWW, LFRG…VIFM, GELP…FAMA, and VVVA…FSII. An ABC transmembrane type-1 2 domain is found at 900-1139; the sequence is LLSGIMYAVG…VGVVAISTQL (240 aa). N-linked (GlcNAc...) asparagine glycosylation occurs at Asn1101. A helical transmembrane segment spans residues 1116–1136; sequence FLATFLNLIVMVLAVGVVAIS. Positions 1218-1468 constitute an ABC transporter 2 domain; it reads YKNDDESPAS…EGSWFSQLWA (251 aa). 1255–1262 lines the ATP pocket; that stretch reads GRTGSGKS. N-linked (GlcNAc...) asparagine glycans are attached at residues Asn1277 and Asn1293.

It belongs to the ABC transporter superfamily. ABCC family. Conjugate transporter (TC 3.A.1.208) subfamily.

Its subcellular location is the cell membrane. It functions in the pathway secondary metabolite biosynthesis. In terms of biological role, ABC transporter; part of the Fg3_54/C64 gene cluster that mediates the biosynthesis of the octapeptide fusaoctaxin A, a virulence factor that is required for cell-to-cell invasiveness of plant host. The 2 nonribosomal peptide synthetases NRPS9 and NRPS5 form an assembly line which likely utilizes GABA as a starter unit (loaded on the unique module M1 of NRPS9) and sequentially incorporates seven extender units composed of the residues L-Ala, L-allo-Ile, L-Ser, L-Val, L-Ser, L-Leu and L-Leu, respectively. During the process, each of the residues that are tethered on modules M3-M7 of NRPS5 containing an E domain can undergo an epimerization reaction to produce a D-configuration before the transpeptidation reaction occurs. The elongation of the peptidyl chain might be terminated by module M8-mediated L-Leu incorporation, followed by R domain-catalyzed 4 electron reduction to release the resulting octapeptide from the assembly line as an alcohol. Fusaoctaxin A is cleaved by the cluster specific ABC transporter FGM5 to the pentapeptide fusapentaxin A and the tripeptide fusatrixin A. The other enzymes from the cluster, FGM1, FGM2, FGM3 and FGM9 seem not to be involved in the biosynthesis of fusaoctaxin A and their functions have still to be determined. The chain is ABC transporter FGM5 from Gibberella zeae (strain ATCC MYA-4620 / CBS 123657 / FGSC 9075 / NRRL 31084 / PH-1) (Wheat head blight fungus).